The primary structure comprises 194 residues: Der GTPase-activating protein YihI (194 aa).

Residues 1 to 81 (MSRSKKTRRI…AKVKKDPRVG (81 aa)) are disordered. Basic and acidic residues-rich tracts occupy residues 9–23 (RISD…DKKP) and 36–47 (TRYELDVQAREE). Residues 59-70 (GSRNVITEQKTA) show a composition bias toward polar residues.

The protein belongs to the YihI family. Interacts with Der.

In terms of biological role, a GTPase-activating protein (GAP) that modifies Der/EngA GTPase function. May play a role in ribosome biogenesis. This is Der GTPase-activating protein YihI from Haemophilus ducreyi (strain 35000HP / ATCC 700724).